We begin with the raw amino-acid sequence, 372 residues long: Putative glutamate--cysteine ligase 2 (372 aa).

The protein belongs to the glutamate--cysteine ligase type 2 family. YbdK subfamily. Homodimer.

It carries out the reaction L-cysteine + L-glutamate + ATP = gamma-L-glutamyl-L-cysteine + ADP + phosphate + H(+). ATP-dependent carboxylate-amine ligase which exhibits weak glutamate--cysteine ligase activity. The polypeptide is Putative glutamate--cysteine ligase 2 (Citrobacter koseri (strain ATCC BAA-895 / CDC 4225-83 / SGSC4696)).